The primary structure comprises 383 residues: Alanine racemase (383 aa).

Residue Lys50 is the Proton acceptor; specific for D-alanine of the active site. Residue Lys50 is modified to N6-(pyridoxal phosphate)lysine. Arg151 is a substrate binding site. Residue Tyr279 is the Proton acceptor; specific for L-alanine of the active site. Met327 lines the substrate pocket.

Belongs to the alanine racemase family. The cofactor is pyridoxal 5'-phosphate.

It catalyses the reaction L-alanine = D-alanine. It participates in amino-acid biosynthesis; D-alanine biosynthesis; D-alanine from L-alanine: step 1/1. In terms of biological role, catalyzes the interconversion of L-alanine and D-alanine. May also act on other amino acids. This chain is Alanine racemase (alr), found in Chlorobaculum tepidum (strain ATCC 49652 / DSM 12025 / NBRC 103806 / TLS) (Chlorobium tepidum).